Reading from the N-terminus, the 804-residue chain is Cyclic di-GMP-binding protein (804 aa).

A signal peptide spans 1 to 18; that stretch reads MKMVSLIALLVFATGAQA. Residues 19–766 are Periplasmic-facing; sequence APIASKAPAH…DWYMHNHPFR (748 aa). A disordered region spans residues 24–69; the sequence is KAPAHQPTGSDLPPLPAAAPVAPAAQPSAQAVDPASAAPASDAGSA. The helical transmembrane segment at 767–787 threads the bilayer; sequence VIVVGLVGCLLVVAVLVRALF. Topologically, residues 788–804 are cytoplasmic; that stretch reads RHAMFRRRQLQEERQKS.

This sequence belongs to the AcsB/BcsB family. In terms of assembly, tightly associated with the cellulose synthase catalytic subunit.

It is found in the cell inner membrane. It functions in the pathway glycan metabolism; bacterial cellulose biosynthesis. In terms of biological role, binds the cellulose synthase activator, bis-(3'-5') cyclic diguanylic acid (c-di-GMP). This chain is Cyclic di-GMP-binding protein (bcsBI), found in Komagataeibacter xylinus (Gluconacetobacter xylinus).